The chain runs to 476 residues: Arginine biosynthesis bifunctional protein ArgJ, mitochondrial (476 aa).

Substrate is bound by residues T193, K219, T237, E337, N471, and S476. T237 functions as the Nucleophile in the catalytic mechanism.

The protein belongs to the ArgJ family. Heterodimer of an alpha and a beta chain. Post-translationally, the alpha and beta chains are autoproteolytically processed from a single precursor protein within the mitochondrion.

Its subcellular location is the mitochondrion matrix. The enzyme catalyses N(2)-acetyl-L-ornithine + L-glutamate = N-acetyl-L-glutamate + L-ornithine. The catalysed reaction is L-glutamate + acetyl-CoA = N-acetyl-L-glutamate + CoA + H(+). It functions in the pathway amino-acid biosynthesis; L-arginine biosynthesis; L-ornithine and N-acetyl-L-glutamate from L-glutamate and N(2)-acetyl-L-ornithine (cyclic): step 1/1. The protein operates within amino-acid biosynthesis; L-arginine biosynthesis; N(2)-acetyl-L-ornithine from L-glutamate: step 1/4. In terms of biological role, catalyzes two activities which are involved in the cyclic version of arginine biosynthesis: the synthesis of acetylglutamate from glutamate and acetyl-CoA, and of ornithine by transacetylation between acetylornithine and glutamate. The protein is Arginine biosynthesis bifunctional protein ArgJ, mitochondrial of Cryptococcus neoformans var. neoformans serotype D (strain JEC21 / ATCC MYA-565) (Filobasidiella neoformans).